Consider the following 513-residue polypeptide: Cytochrome P450 71D445 (513 aa).

A helical; Signal-anchor for type II membrane protein transmembrane segment spans residues 12-28 (SEWAITSTITLLFLILL). Residue C450 coordinates heme.

This sequence belongs to the cytochrome P450 family. Requires heme as cofactor. Expressed in mature seeds.

It localises to the membrane. The catalysed reaction is (-)-casbene + reduced [NADPH--hemoprotein reductase] + O2 = 8-hydroxycasbene + oxidized [NADPH--hemoprotein reductase] + H2O + H(+). It catalyses the reaction 4-hydroxycasbene + reduced [NADPH--hemoprotein reductase] + O2 = 4,8-dihydroxycasbene + oxidized [NADPH--hemoprotein reductase] + H2O + H(+). It carries out the reaction 4,8-dihydroxycasbene + reduced [NADPH--hemoprotein reductase] + O2 = 4,5,8-trihydroxycasbene + oxidized [NADPH--hemoprotein reductase] + H2O + H(+). It functions in the pathway secondary metabolite biosynthesis; terpenoid biosynthesis. In terms of biological role, involved in the biosynthesis of macrocyclic lathyrane type diterpenoids (also called Euphorbia factors) natural products, including the cyclization route from casbene to jolkinol C, a precursor for ingenol mebutate that is used to treat actinic keratosis, a precancerous skin condition. Catalyzes the hydroxylation of (-)-casbene and 4-hydroxycasbene to produce 8-hydroxycasbene and 4,8-dihydroxycasbene, respectively. Also mediates the formation of 4-hydroxy-8-ketocasbene from 4,8-dihydroxycasbene. Together with ADH1, triggers the biosynthesis of 8-ketocasbene from 8-hydroxycasbene. The chain is Cytochrome P450 71D445 from Euphorbia lathyris (Caper spurge).